The sequence spans 165 residues: Ubiquitin-fold modifier-conjugating enzyme 1 (165 aa).

Cys117 serves as the catalytic Glycyl thioester intermediate.

Belongs to the ubiquitin-conjugating enzyme family. UFC1 subfamily.

Functionally, E2-like enzyme which forms an intermediate with UFM1 via a thioester linkage. The sequence is that of Ubiquitin-fold modifier-conjugating enzyme 1 from Brugia malayi (Filarial nematode worm).